Reading from the N-terminus, the 169-residue chain is MWSRNVRLLGSWTRSYMVPATKRKTIPVYPPVQRIASSQIMKQVALSEIESLDPGAVKRKLISKKNKDRLKAGDVVRIVYDSSKCSYDTFVGYILSIDRKQLVQDASLLLRNQIAKTAVEIRVPLFSPLIERIDLLTPHVSSRQRNKHYYIRGTRLDVGDLEAGLRRKK.

The transit peptide at 1-16 (MWSRNVRLLGSWTRSY) directs the protein to the mitochondrion.

This sequence belongs to the bacterial ribosomal protein bL19 family. Component of the mitochondrial large ribosomal subunit (mt-LSU). Mature yeast 74S mitochondrial ribosomes consist of a small (37S) and a large (54S) subunit. The 37S small subunit contains a 15S ribosomal RNA (15S mt-rRNA) and 34 different proteins. The 54S large subunit contains a 21S rRNA (21S mt-rRNA) and 46 different proteins.

It is found in the mitochondrion. In terms of biological role, component of the mitochondrial ribosome (mitoribosome), a dedicated translation machinery responsible for the synthesis of mitochondrial genome-encoded proteins, including at least some of the essential transmembrane subunits of the mitochondrial respiratory chain. The mitoribosomes are attached to the mitochondrial inner membrane and translation products are cotranslationally integrated into the membrane. bL19m is essential for respiration. In Saccharomyces cerevisiae (strain ATCC 204508 / S288c) (Baker's yeast), this protein is Large ribosomal subunit protein bL19m (IMG1).